The primary structure comprises 461 residues: Coronin-1A (461 aa).

The residue at position 2 (S2) is an N-acetylserine. S2 bears the Phosphoserine; by PKC mark. WD repeat units follow at residues 13–63 (HVFG…LVLP), 73–110 (NVPLVCGHTAPVLDIAWCPHNDNVIASGSEDCTVMVWE), 123–160 (PVVTLEGHTKRVGIVAWHPTAQNVLLSAGCDNVILVWD), 164–204 (GAAV…RVIE), 207–251 (KGTV…ALWD), 258–296 (PLSLQELDTSSGVLLPFFDPDTNIVYLCGKGDSSIRYFE), and 302–349 (PFLH…EPIA). Basic and acidic residues predominate over residues 407-418 (NRGLDSARRRAT). The interval 407–431 (NRGLDSARRRATPEPSSTLSSDTVS) is disordered. Position 412 is a phosphoserine; by PKC (S412). A Phosphothreonine modification is found at T418. Residues 420 to 430 (EPSSTLSSDTV) are compositionally biased toward polar residues. Position 422 is a phosphoserine (S422). The stretch at 425–461 (LSSDTVSRLEEDVRNLNAIVQKLQERLDRLEETVQAK) forms a coiled coil.

The protein belongs to the WD repeat coronin family. Binds actin. In terms of processing, phosphorylation at Ser-412 by PKC strongly down-regulates the association with actin. Polyubiquitinated by RNF128 with 'Lys-48'-linked chains, leading to proteasomal degradation.

Its subcellular location is the cytoplasm. It localises to the cytoskeleton. The protein localises to the cell cortex. It is found in the cytoplasmic vesicle. The protein resides in the phagosome membrane. Functionally, may be a crucial component of the cytoskeleton of highly motile cells, functioning both in the invagination of large pieces of plasma membrane, as well as in forming protrusions of the plasma membrane involved in cell locomotion. The chain is Coronin-1A (Coro1a) from Rattus norvegicus (Rat).